Here is a 1000-residue protein sequence, read N- to C-terminus: Integrin alpha-PS5 (1000 aa).

FG-GAP repeat units follow at residues 15-74, 75-137, 145-198, 199-261, 262-323, 324-379, and 386-448; these read KHLK…GSCS, HYVL…DTPP, SLIP…AAQG, SYAV…GEIV, RKLH…FKFE, KKII…GLRD, and DAPS…SESR. Asn-58 is a glycosylation site (N-linked (GlcNAc...) asparagine). An N-linked (GlcNAc...) asparagine glycan is attached at Asn-231. Asn-516, Asn-592, Asn-622, Asn-732, Asn-771, Asn-829, Asn-842, Asn-853, and Asn-922 each carry an N-linked (GlcNAc...) asparagine glycan. The helical transmembrane segment at 930–950 threads the bilayer; sequence IWYIILSLIAGHLLLGAMTYI. Over 951 to 1000 the chain is Cytoplasmic; it reads LYKLRFFKRGKKEELKRLLEEHRSETKEPATDCEGNQEEINVEMHSDLEN. The segment covering 971–980 has biased composition (basic and acidic residues); that stretch reads EHRSETKEPA. The disordered stretch occupies residues 971–1000; it reads EHRSETKEPATDCEGNQEEINVEMHSDLEN.

It belongs to the integrin alpha chain family. As to quaternary structure, heterodimer of an alpha and a beta subunit. Alpha-PS5 associates with beta-PS. Expressed in all follicle cells overlying the oocyte during mid-oogenesis, the strongest expression is observed in the cells covering the anterior end of the oocyte and in the cells forming the dorsal appendages. After completion of oocyte enlargement, expression in main body follicle cells is down-regulated but persists strongly in the dorsal appendage forming cells. Expressed in lamellocytes.

The protein resides in the membrane. Possible role in cell-cell interactions. Minor involvement in the establishment of the oocyte anterior-posterior length. This chain is Integrin alpha-PS5, found in Drosophila melanogaster (Fruit fly).